We begin with the raw amino-acid sequence, 422 residues long: Serine--tRNA ligase (422 aa).

229–231 lines the L-serine pocket; the sequence is TAE. Residue 260-262 coordinates ATP; that stretch reads RRE. Residue E283 coordinates L-serine. 347–350 is an ATP binding site; that stretch reads EISS. Residue S383 participates in L-serine binding.

It belongs to the class-II aminoacyl-tRNA synthetase family. Type-1 seryl-tRNA synthetase subfamily. As to quaternary structure, homodimer. The tRNA molecule binds across the dimer.

It localises to the cytoplasm. The enzyme catalyses tRNA(Ser) + L-serine + ATP = L-seryl-tRNA(Ser) + AMP + diphosphate + H(+). The catalysed reaction is tRNA(Sec) + L-serine + ATP = L-seryl-tRNA(Sec) + AMP + diphosphate + H(+). It participates in aminoacyl-tRNA biosynthesis; selenocysteinyl-tRNA(Sec) biosynthesis; L-seryl-tRNA(Sec) from L-serine and tRNA(Sec): step 1/1. In terms of biological role, catalyzes the attachment of serine to tRNA(Ser). Is also able to aminoacylate tRNA(Sec) with serine, to form the misacylated tRNA L-seryl-tRNA(Sec), which will be further converted into selenocysteinyl-tRNA(Sec). This chain is Serine--tRNA ligase, found in Pelobacter propionicus (strain DSM 2379 / NBRC 103807 / OttBd1).